A 311-amino-acid polypeptide reads, in one-letter code: NAD kinase (311 aa).

The active-site Proton acceptor is Asp89. Residues 89-90, Arg94, 163-164, Asp193, and 204-209 each bind NAD(+); these read DG, NE, and TAYAFS.

It belongs to the NAD kinase family. It depends on a divalent metal cation as a cofactor.

Its subcellular location is the cytoplasm. The enzyme catalyses NAD(+) + ATP = ADP + NADP(+) + H(+). Functionally, involved in the regulation of the intracellular balance of NAD and NADP, and is a key enzyme in the biosynthesis of NADP. Catalyzes specifically the phosphorylation on 2'-hydroxyl of the adenosine moiety of NAD to yield NADP. This chain is NAD kinase, found in Mycobacterium leprae (strain Br4923).